The chain runs to 126 residues: Histone H2B type 2-E (126 aa).

Over residues 1 to 12 the composition is skewed to low complexity; the sequence is MPEPAKSAPAPK. Positions 1–32 are disordered; that stretch reads MPEPAKSAPAPKKGSKKAVTKAQKKDGKKRKR. P2 carries the N-acetylproline modification. E3 is modified (ADP-ribosyl glutamic acid). Position 6 is an N6-(2-hydroxyisobutyryl)lysine; alternate (K6). At K6 the chain carries N6-(beta-hydroxybutyryl)lysine; alternate. K6 is subject to N6-acetyllysine; alternate. K6 is modified (N6-butyryllysine; alternate). Residue K6 is modified to N6-crotonyllysine; alternate. K6 carries the N6-lactoyllysine; alternate modification. A Glycyl lysine isopeptide (Lys-Gly) (interchain with G-Cter in SUMO2); alternate cross-link involves residue K6. Position 7 is an ADP-ribosylserine (S7). The residue at position 12 (K12) is an N6-(beta-hydroxybutyryl)lysine; alternate. 2 positions are modified to N6-acetyllysine; alternate: K12 and K13. N6-crotonyllysine; alternate is present on residues K12 and K13. An N6-lactoyllysine; alternate modification is found at K12. At K13 the chain carries N6-(2-hydroxyisobutyryl)lysine; alternate. S15 bears the Phosphoserine; by STK4/MST1 mark. 4 positions are modified to N6-acetyllysine; alternate: K16, K17, K21, and K24. 4 positions are modified to N6-crotonyllysine; alternate: K16, K17, K21, and K24. N6-lactoyllysine; alternate occurs at positions 16, 17, 21, and 24. At K17 the chain carries N6-glutaryllysine; alternate. An N6-(2-hydroxyisobutyryl)lysine; alternate mark is found at K21 and K24. K21 is subject to N6-(beta-hydroxybutyryl)lysine; alternate. K21 carries the post-translational modification N6-butyryllysine; alternate. Residue K21 forms a Glycyl lysine isopeptide (Lys-Gly) (interchain with G-Cter in SUMO2); alternate linkage. Position 25 is an N6-(2-hydroxyisobutyryl)lysine (K25). The residue at position 35 (K35) is an N6-(2-hydroxyisobutyryl)lysine; alternate. The residue at position 35 (K35) is an N6-(beta-hydroxybutyryl)lysine; alternate. K35 bears the N6-crotonyllysine; alternate mark. K35 is subject to N6-glutaryllysine; alternate. Residue K35 is modified to N6-succinyllysine; alternate. K35 is covalently cross-linked (Glycyl lysine isopeptide (Lys-Gly) (interchain with G-Cter in ubiquitin); alternate). PolyADP-ribosyl glutamic acid is present on E36. S37 bears the Phosphoserine; by AMPK mark. 3 positions are modified to N6-(2-hydroxyisobutyryl)lysine; alternate: K44, K47, and K58. K44 carries the post-translational modification N6-lactoyllysine; alternate. Residues K44 and K47 each carry the N6-glutaryllysine; alternate modification. K47 carries the N6-methyllysine; alternate modification. The residue at position 58 (K58) is an N6,N6-dimethyllysine; alternate. R80 carries the post-translational modification Dimethylated arginine. Residue K86 is modified to N6-(2-hydroxyisobutyryl)lysine; alternate. K86 carries the post-translational modification N6-acetyllysine; alternate. Position 86 is an N6-lactoyllysine; alternate (K86). K86 is modified (N6,N6,N6-trimethyllysine; alternate). An omega-N-methylarginine mark is found at R87 and R93. Residue K109 is modified to N6-(2-hydroxyisobutyryl)lysine; alternate. K109 is modified (N6-lactoyllysine; alternate). K109 carries the N6-glutaryllysine; alternate modification. N6-methyllysine; alternate is present on K109. S113 carries an O-linked (GlcNAc) serine glycan. Residue T116 is modified to Phosphothreonine. 2 positions are modified to N6-(2-hydroxyisobutyryl)lysine; alternate: K117 and K121. N6-(beta-hydroxybutyryl)lysine; alternate is present on K117. An N6-lactoyllysine; alternate mark is found at K117 and K121. N6-glutaryllysine; alternate occurs at positions 117 and 121. An N6-succinyllysine; alternate mark is found at K117 and K121. At K117 the chain carries N6-methylated lysine; alternate. A Glycyl lysine isopeptide (Lys-Gly) (interchain with G-Cter in ubiquitin); alternate cross-link involves residue K121.

It belongs to the histone H2B family. The nucleosome is a histone octamer containing two molecules each of H2A, H2B, H3 and H4 assembled in one H3-H4 heterotetramer and two H2A-H2B heterodimers. The octamer wraps approximately 147 bp of DNA. Post-translationally, monoubiquitination at Lys-35 (H2BK34Ub) by the MSL1/MSL2 dimer is required for histone H3 'Lys-4' (H3K4me) and 'Lys-79' (H3K79me) methylation and transcription activation at specific gene loci, such as HOXA9 and MEIS1 loci. Similarly, monoubiquitination at Lys-121 (H2BK120Ub) by the RNF20/40 complex gives a specific tag for epigenetic transcriptional activation and is also prerequisite for histone H3 'Lys-4' and 'Lys-79' methylation. It also functions cooperatively with the FACT dimer to stimulate elongation by RNA polymerase II. H2BK120Ub also acts as a regulator of mRNA splicing: deubiquitination by USP49 is required for efficient cotranscriptional splicing of a large set of exons. In terms of processing, phosphorylated on Ser-15 (H2BS14ph) by STK4/MST1 during apoptosis; which facilitates apoptotic chromatin condensation. Also phosphorylated on Ser-15 in response to DNA double strand breaks (DSBs), and in correlation with somatic hypermutation and immunoglobulin class-switch recombination. Phosphorylation at Ser-37 (H2BS36ph) by AMPK in response to stress promotes transcription. ADP-ribosylated by PARP1 or PARP2 on Ser-7 (H2BS6ADPr) in response to DNA damage. H2BS6ADPr promotes recruitment of CHD1L. Mono-ADP-ribosylated on Glu-3 (H2BE2ADPr) by PARP3 in response to single-strand breaks. Poly ADP-ribosylation on Glu-36 (H2BE35ADPr) by PARP1 regulates adipogenesis: it inhibits phosphorylation at Ser-37 (H2BS36ph), thereby blocking expression of pro-adipogenetic genes. Post-translationally, crotonylation (Kcr) is specifically present in male germ cells and marks testis-specific genes in post-meiotic cells, including X-linked genes that escape sex chromosome inactivation in haploid cells. Crotonylation marks active promoters and enhancers and confers resistance to transcriptional repressors. It is also associated with post-meiotically activated genes on autosomes. In terms of processing, glcNAcylation at Ser-113 promotes monoubiquitination of Lys-121. It fluctuates in response to extracellular glucose, and associates with transcribed genes. Lactylated in macrophages by EP300/P300 by using lactoyl-CoA directly derived from endogenous or exogenous lactate, leading to stimulates gene transcription.

Its subcellular location is the nucleus. The protein localises to the chromosome. Its function is as follows. Core component of nucleosome. Nucleosomes wrap and compact DNA into chromatin, limiting DNA accessibility to the cellular machineries which require DNA as a template. Histones thereby play a central role in transcription regulation, DNA repair, DNA replication and chromosomal stability. DNA accessibility is regulated via a complex set of post-translational modifications of histones, also called histone code, and nucleosome remodeling. In terms of biological role, has broad antibacterial activity. May contribute to the formation of the functional antimicrobial barrier of the colonic epithelium, and to the bactericidal activity of amniotic fluid. This chain is Histone H2B type 2-E, found in Pongo abelii (Sumatran orangutan).